A 160-amino-acid chain; its full sequence is E3 ubiquitin ligase complex SCF subunit sconC (160 aa).

The interaction with the F-box domain of F-box proteins stretch occupies residues 101–160; sequence ILAANYLDIKALLDVGCKTVANMIKGKSPEEIRKTFNIQNDFTPEEEDQIRRENEWAEDR.

This sequence belongs to the SKP1 family. Component of the SCF (SKP1-CUL1-F-box protein) E3 ubiquitin ligase complexes.

It functions in the pathway protein modification; protein ubiquitination. Essential component of the SCF (SKP1-CUL1-F-box protein) E3 ubiquitin ligase complexes, which mediate the ubiquitination and subsequent proteasomal degradation of target proteins. Controls sulfur metabolite repression, probably by mediating the inactivation or degradation of the metR transcription factor. This chain is E3 ubiquitin ligase complex SCF subunit sconC (sconC), found in Talaromyces stipitatus (strain ATCC 10500 / CBS 375.48 / QM 6759 / NRRL 1006) (Penicillium stipitatum).